A 333-amino-acid chain; its full sequence is Probable siderophore transport system permease protein YfiZ (333 aa).

The signal sequence occupies residues 1-31; it reads MICKKASSKWIVLVCLIFILLTAVCASVVYG. Helical transmembrane passes span 64–84, 94–114, 119–139, 152–172, 193–213, 246–266, 280–300, and 303–323; these read ALVA…MQAL, IFGI…FLHI, ALVW…YAAG, TLAG…LLSV, LDLL…CFFL, VMLA…GIII, WVLP…DIGA, and IIMP…MPVF.

The protein belongs to the binding-protein-dependent transport system permease family. FecCD subfamily. As to quaternary structure, the complex is composed of one ATP-binding protein (YusV), two transmembrane proteins (YfiZ and YfhA) and a solute-binding protein (YfiY).

It localises to the cell membrane. Part of the ABC transporter complex YfiYZ/YfhA/YusV involved in import of the iron-hydroxamate siderophores schizokinen, arthrobactin and corprogen. The chain is Probable siderophore transport system permease protein YfiZ (yfiZ) from Bacillus subtilis (strain 168).